The sequence spans 239 residues: Ribonuclease 3 (239 aa).

An RNase III domain is found at 12–137 (ISRLEALIGY…LIATLYLDGG (126 aa)). Glutamate 50 provides a ligand contact to Mg(2+). Aspartate 54 is an active-site residue. 2 residues coordinate Mg(2+): aspartate 123 and glutamate 126. Glutamate 126 is an active-site residue. The 70-residue stretch at 162 to 231 (DAKTELQEWA…ATRLLEREGV (70 aa)) folds into the DRBM domain.

The protein belongs to the ribonuclease III family. As to quaternary structure, homodimer. The cofactor is Mg(2+).

The protein resides in the cytoplasm. The enzyme catalyses Endonucleolytic cleavage to 5'-phosphomonoester.. In terms of biological role, digests double-stranded RNA. Involved in the processing of primary rRNA transcript to yield the immediate precursors to the large and small rRNAs (23S and 16S). Processes some mRNAs, and tRNAs when they are encoded in the rRNA operon. Processes pre-crRNA and tracrRNA of type II CRISPR loci if present in the organism. The polypeptide is Ribonuclease 3 (Agrobacterium fabrum (strain C58 / ATCC 33970) (Agrobacterium tumefaciens (strain C58))).